Consider the following 244-residue polypeptide: MAGHSKWANIKHKKAKEDAKRGKIFTRLIRELTVAARHGGSDINANPRLRLAVSKAQAENMTKETMERAIKRGAGELDGVQMEEVRFEGYGPSGVAIIVDCLTDNNNRTVGEVRHAFSKCGGNLGTSGSVAFQFKEQGVLFFENVDDEDALMEAALNAGAEDIEFDDKSAEILTAPEEYANVYEALVQAGFTADESEVTLRAENLSAVSLEDAEQVARLLEMLEELDDVQSVVSNADFPEEFEG.

This sequence belongs to the TACO1 family.

It is found in the cytoplasm. This is Probable transcriptional regulatory protein DNO_1179 from Dichelobacter nodosus (strain VCS1703A).